Reading from the N-terminus, the 367-residue chain is Pyrimidine monooxygenase RutA (367 aa).

Residues 49-50 (IK), Asn-115, Glu-124, 140-141 (RY), and Ser-190 contribute to the FMN site.

It belongs to the NtaA/SnaA/DszA monooxygenase family. RutA subfamily.

The catalysed reaction is uracil + FMNH2 + NADH + O2 = (Z)-3-ureidoacrylate + FMN + NAD(+) + H2O + H(+). It carries out the reaction thymine + FMNH2 + NADH + O2 = (Z)-2-methylureidoacrylate + FMN + NAD(+) + H2O + H(+). Its function is as follows. Catalyzes the pyrimidine ring opening between N-3 and C-4 by an unusual flavin hydroperoxide-catalyzed mechanism, adding oxygen atoms in the process to yield ureidoacrylate peracid, that immediately reacts with FMN forming ureidoacrylate and FMN-N(5)-oxide. The FMN-N(5)-oxide reacts spontaneously with NADH to produce FMN. Requires the flavin reductase RutF to regenerate FMN in vivo. The sequence is that of Pyrimidine monooxygenase RutA from Yersinia enterocolitica serotype O:8 / biotype 1B (strain NCTC 13174 / 8081).